The primary structure comprises 339 residues: NADH-quinone oxidoreductase subunit H (339 aa).

Transmembrane regions (helical) follow at residues Phe-10–Val-30, Pro-50–Phe-70, Ile-82–Ile-102, Val-115–Gly-135, Ile-155–Leu-175, Leu-187–Leu-207, Met-235–Thr-255, Ile-275–Ile-295, and Gly-311–Phe-331.

The protein belongs to the complex I subunit 1 family. NDH-1 is composed of 14 different subunits. Subunits NuoA, H, J, K, L, M, N constitute the membrane sector of the complex.

It localises to the cell inner membrane. It catalyses the reaction a quinone + NADH + 5 H(+)(in) = a quinol + NAD(+) + 4 H(+)(out). In terms of biological role, NDH-1 shuttles electrons from NADH, via FMN and iron-sulfur (Fe-S) centers, to quinones in the respiratory chain. The immediate electron acceptor for the enzyme in this species is believed to be ubiquinone. Couples the redox reaction to proton translocation (for every two electrons transferred, four hydrogen ions are translocated across the cytoplasmic membrane), and thus conserves the redox energy in a proton gradient. This subunit may bind ubiquinone. The protein is NADH-quinone oxidoreductase subunit H of Rickettsia typhi (strain ATCC VR-144 / Wilmington).